Reading from the N-terminus, the 214-residue chain is Pyridoxine/pyridoxamine 5'-phosphate oxidase (214 aa).

Substrate is bound by residues 8 to 11 (RTNY) and K66. FMN-binding positions include 61-66 (RIVLIK), 76-77 (FT), R82, K83, and Q105. The substrate site is built by Y123, R127, and S131. Residues 140–141 (QS) and W184 each bind FMN. Substrate is bound at residue 190–192 (RLH). An FMN-binding site is contributed by R194.

Belongs to the pyridoxamine 5'-phosphate oxidase family. In terms of assembly, homodimer. The cofactor is FMN.

The enzyme catalyses pyridoxamine 5'-phosphate + O2 + H2O = pyridoxal 5'-phosphate + H2O2 + NH4(+). It catalyses the reaction pyridoxine 5'-phosphate + O2 = pyridoxal 5'-phosphate + H2O2. It participates in cofactor metabolism; pyridoxal 5'-phosphate salvage; pyridoxal 5'-phosphate from pyridoxamine 5'-phosphate: step 1/1. The protein operates within cofactor metabolism; pyridoxal 5'-phosphate salvage; pyridoxal 5'-phosphate from pyridoxine 5'-phosphate: step 1/1. Catalyzes the oxidation of either pyridoxine 5'-phosphate (PNP) or pyridoxamine 5'-phosphate (PMP) into pyridoxal 5'-phosphate (PLP). The polypeptide is Pyridoxine/pyridoxamine 5'-phosphate oxidase (Burkholderia pseudomallei (strain 1106a)).